The chain runs to 240 residues: MDQTNETKILVVDDEARIRRLLRMYLERENYAIDEAENGDEAIAKGLEANYDLILLDLMMPGTDGIEVCRQIREKKATPIIMLTAKGEEANRVQGFEAGTDDYIVKPFSPREVVLRVKALLRRASQTSYFNANTPTKNVLVFSHLSIDHDAHRVTADGTEVSLTPKEYELLYFLAKTPDKVYDREKLLKEVWQYEFFGDLRTVDTHVKRLREKLNKVSPEAAKKIVTVWGVGYKFEVGAE.

Residues 8–121 (KILVVDDEAR…EVVLRVKALL (114 aa)) enclose the Response regulatory domain. Asp57 is modified (4-aspartylphosphate). Residues 137-237 (KNVLVFSHLS…VWGVGYKFEV (101 aa)) constitute a DNA-binding region (ompR/PhoB-type).

As to quaternary structure, interacts with the RNA polymerase core. Phosphorylated by ResE.

The protein localises to the cytoplasm. Its function is as follows. Member of the two-component regulatory system ResD/ResE. Required for the expression of resA, ctaA, qcrABC and fnr; activation role in global regulation of aerobic and anaerobic respiration. This is Transcriptional regulatory protein ResD (resD) from Bacillus subtilis (strain 168).